A 539-amino-acid chain; its full sequence is Beta-agarase A (539 aa).

The first 19 residues, 1 to 19 (MKKNYLLLYFIFLLCGSIA), serve as a signal peptide directing secretion. One can recognise a GH16 domain in the interval 21–289 (QDWNGIPVPA…WIRVYKPVAV (269 aa)). Substrate is bound by residues W73, 82-92 (NAPQAWTNGSQ), 96-98 (QAQ), and E144. The active-site Nucleophile is the E147. E152 serves as the catalytic Proton donor. The substrate site is built by R176 and D271. The disordered stretch occupies residues 332–353 (WANTNDIGSRDRGASNGRNNIN).

This sequence belongs to the glycosyl hydrolase 16 family. As to quaternary structure, monomer. Proteolytically cleaved into mature beta-agarase A catalytic chain (AgaAc).

It localises to the secreted. The catalysed reaction is Hydrolysis of (1-&gt;4)-beta-D-galactosidic linkages in agarose, giving the tetramer as the predominant product.. In terms of biological role, cleaves the beta-1,4-linkages between beta-D-galactose and alpha-L-3,6-anhydro-galactose residues in agarose. Cleaves agarose in a random manner with retention of the anomeric-bond configuration, producing beta-anomers that give rise progressively to alpha-anomers when mutarotation takes place. The chain is Beta-agarase A (agaA) from Zobellia galactanivorans (strain DSM 12802 / CCUG 47099 / CIP 106680 / NCIMB 13871 / Dsij).